A 228-amino-acid chain; its full sequence is ATP synthase F(0) complex subunit a (228 aa).

6 consecutive transmembrane segments (helical) span residues 13 to 33, 70 to 90, 100 to 120, 140 to 160, 162 to 182, and 190 to 210; these read YFLGFPLMIFIAILISLTMFI, WALLLMTTLMFIFLNNITGLL, LSLNMAMAIPLWLGTIIMGAT, APFLIVIESISIIIRPLALGV, LTANITAGHLLIHLVSLALIN, and LFLTFSVFILLLILELAVSFI.

The protein belongs to the ATPase A chain family. Component of the ATP synthase complex composed at least of ATP5F1A/subunit alpha, ATP5F1B/subunit beta, ATP5MC1/subunit c (homooctomer), MT-ATP6/subunit a, MT-ATP8/subunit 8, ATP5ME/subunit e, ATP5MF/subunit f, ATP5MG/subunit g, ATP5MK/subunit k, ATP5MJ/subunit j, ATP5F1C/subunit gamma, ATP5F1D/subunit delta, ATP5F1E/subunit epsilon, ATP5PF/subunit F6, ATP5PB/subunit b, ATP5PD/subunit d, ATP5PO/subunit OSCP. ATP synthase complex consists of a soluble F(1) head domain (subunits alpha(3) and beta(3)) - the catalytic core - and a membrane F(0) domain - the membrane proton channel (subunits c, a, 8, e, f, g, k and j). These two domains are linked by a central stalk (subunits gamma, delta, and epsilon) rotating inside the F1 region and a stationary peripheral stalk (subunits F6, b, d, and OSCP). Interacts with DNAJC30; interaction is direct.

It localises to the mitochondrion inner membrane. The catalysed reaction is H(+)(in) = H(+)(out). Subunit a, of the mitochondrial membrane ATP synthase complex (F(1)F(0) ATP synthase or Complex V) that produces ATP from ADP in the presence of a proton gradient across the membrane which is generated by electron transport complexes of the respiratory chain. ATP synthase complex consist of a soluble F(1) head domain - the catalytic core - and a membrane F(1) domain - the membrane proton channel. These two domains are linked by a central stalk rotating inside the F(1) region and a stationary peripheral stalk. During catalysis, ATP synthesis in the catalytic domain of F(1) is coupled via a rotary mechanism of the central stalk subunits to proton translocation. With the subunit c (ATP5MC1), forms the proton-conducting channel in the F(0) domain, that contains two crucial half-channels (inlet and outlet) that facilitate proton movement from the mitochondrial intermembrane space (IMS) into the matrix. Protons are taken up via the inlet half-channel and released through the outlet half-channel, following a Grotthuss mechanism. This is ATP synthase F(0) complex subunit a from Myxine glutinosa (Atlantic hagfish).